A 645-amino-acid chain; its full sequence is Putative bifunctional exonuclease/endonuclease protein MT2247 (645 aa).

Residues 44-207 (VVVDLETTGG…DDARATVDVL (164 aa)) form the Exonuclease domain. Positions 248–326 (HRPGVYLFRG…LSTHAPPYNR (79 aa)) constitute a GIY-YIG domain. Residues 603 to 645 (WQSDLPTEPHPSREQLFGRTGVDCRTGPPQPLLPGRQPFSTAG) are disordered. Positions 635–645 (LPGRQPFSTAG) are enriched in low complexity.

This Mycobacterium tuberculosis (strain CDC 1551 / Oshkosh) protein is Putative bifunctional exonuclease/endonuclease protein MT2247.